Consider the following 99-residue polypeptide: UPF0235 protein PM1313 (99 aa).

Belongs to the UPF0235 family.

This Pasteurella multocida (strain Pm70) protein is UPF0235 protein PM1313.